Reading from the N-terminus, the 605-residue chain is Aspartate--tRNA(Asp/Asn) ligase (605 aa).

Position 176 (E176) interacts with L-aspartate. The tract at residues 200–203 is aspartate; that stretch reads QQFK. L-aspartate-binding residues include R222 and H452. 222 to 224 is a binding site for ATP; it reads RDE. Residue E490 participates in ATP binding. R497 contributes to the L-aspartate binding site. Position 542–545 (542–545) interacts with ATP; that stretch reads GIDR.

Belongs to the class-II aminoacyl-tRNA synthetase family. Type 1 subfamily. Homodimer.

Its subcellular location is the cytoplasm. It catalyses the reaction tRNA(Asx) + L-aspartate + ATP = L-aspartyl-tRNA(Asx) + AMP + diphosphate. Its function is as follows. Aspartyl-tRNA synthetase with relaxed tRNA specificity since it is able to aspartylate not only its cognate tRNA(Asp) but also tRNA(Asn). Reaction proceeds in two steps: L-aspartate is first activated by ATP to form Asp-AMP and then transferred to the acceptor end of tRNA(Asp/Asn). The polypeptide is Aspartate--tRNA(Asp/Asn) ligase (Rickettsia prowazekii (strain Madrid E)).